The following is a 290-amino-acid chain: TIP41-like protein (290 aa).

The protein belongs to the TIP41 family. Interacts with TAP46. Widely expressed.

In terms of biological role, may be involved in the regulation of the TOR signaling pathway. Indirectly activates the PP2A phosphatase via interaction with its suppressor TAP46. Could play a role in cytoskeleton functions. The chain is TIP41-like protein from Arabidopsis thaliana (Mouse-ear cress).